The following is a 277-amino-acid chain: Large ribosomal subunit protein uL2 (277 aa).

Disordered regions lie at residues 35–58 and 213–277; these read QPLPKRAGRNNQGKLTVRHHGGGH and WKGI…RKRK.

It belongs to the universal ribosomal protein uL2 family. In terms of assembly, part of the 50S ribosomal subunit. Forms a bridge to the 30S subunit in the 70S ribosome.

Functionally, one of the primary rRNA binding proteins. Required for association of the 30S and 50S subunits to form the 70S ribosome, for tRNA binding and peptide bond formation. It has been suggested to have peptidyltransferase activity; this is somewhat controversial. Makes several contacts with the 16S rRNA in the 70S ribosome. This is Large ribosomal subunit protein uL2 from Staphylococcus carnosus (strain TM300).